The chain runs to 101 residues: Small ribosomal subunit protein uS14 (101 aa).

It belongs to the universal ribosomal protein uS14 family. In terms of assembly, part of the 30S ribosomal subunit. Contacts proteins S3 and S10.

In terms of biological role, binds 16S rRNA, required for the assembly of 30S particles and may also be responsible for determining the conformation of the 16S rRNA at the A site. The polypeptide is Small ribosomal subunit protein uS14 (Acinetobacter baumannii (strain AB307-0294)).